A 95-amino-acid polypeptide reads, in one-letter code: CRISPR-associated endoribonuclease Cas2 (95 aa).

Position 10 (D10) interacts with Mg(2+).

This sequence belongs to the CRISPR-associated endoribonuclease Cas2 protein family. Homodimer, forms a heterotetramer with a Cas1 homodimer. Requires Mg(2+) as cofactor.

In terms of biological role, CRISPR (clustered regularly interspaced short palindromic repeat), is an adaptive immune system that provides protection against mobile genetic elements (viruses, transposable elements and conjugative plasmids). CRISPR clusters contain sequences complementary to antecedent mobile elements and target invading nucleic acids. CRISPR clusters are transcribed and processed into CRISPR RNA (crRNA). Functions as a ssRNA-specific endoribonuclease. Involved in the integration of spacer DNA into the CRISPR cassette. This chain is CRISPR-associated endoribonuclease Cas2, found in Geobacter sulfurreducens (strain ATCC 51573 / DSM 12127 / PCA).